The sequence spans 355 residues: Phosphate acyltransferase (355 aa).

It belongs to the PlsX family. Homodimer. Probably interacts with PlsY.

It localises to the cytoplasm. The enzyme catalyses a fatty acyl-[ACP] + phosphate = an acyl phosphate + holo-[ACP]. The protein operates within lipid metabolism; phospholipid metabolism. Its function is as follows. Catalyzes the reversible formation of acyl-phosphate (acyl-PO(4)) from acyl-[acyl-carrier-protein] (acyl-ACP). This enzyme utilizes acyl-ACP as fatty acyl donor, but not acyl-CoA. The chain is Phosphate acyltransferase from Rhodospirillum centenum (strain ATCC 51521 / SW).